The following is a 92-amino-acid chain: Elongation factor 1-beta (92 aa).

The protein belongs to the EF-1-beta/EF-1-delta family.

Functionally, promotes the exchange of GDP for GTP in EF-1-alpha/GDP, thus allowing the regeneration of EF-1-alpha/GTP that could then be used to form the ternary complex EF-1-alpha/GTP/AAtRNA. In Pyrobaculum calidifontis (strain DSM 21063 / JCM 11548 / VA1), this protein is Elongation factor 1-beta.